The chain runs to 63 residues: Large ribosomal subunit protein uL30 (63 aa).

The protein belongs to the universal ribosomal protein uL30 family. Part of the 50S ribosomal subunit.

The sequence is that of Large ribosomal subunit protein uL30 from Rickettsia africae (strain ESF-5).